A 255-amino-acid chain; its full sequence is Aliphatic sulfonates import ATP-binding protein SsuB (255 aa).

Positions 12-233 constitute an ABC transporter domain; the sequence is LLLNAVSKHY…RLGSVRLAEL (222 aa). Residue 44–51 participates in ATP binding; it reads GRSGGGKS.

Belongs to the ABC transporter superfamily. Aliphatic sulfonates importer (TC 3.A.1.17.2) family. In terms of assembly, the complex is composed of two ATP-binding proteins (SsuB), two transmembrane proteins (SsuC) and a solute-binding protein (SsuA).

It localises to the cell inner membrane. It catalyses the reaction ATP + H2O + aliphatic sulfonate-[sulfonate-binding protein]Side 1 = ADP + phosphate + aliphatic sulfonateSide 2 + [sulfonate-binding protein]Side 1.. Part of the ABC transporter complex SsuABC involved in aliphatic sulfonates import. Responsible for energy coupling to the transport system. In Escherichia coli O6:K15:H31 (strain 536 / UPEC), this protein is Aliphatic sulfonates import ATP-binding protein SsuB.